A 250-amino-acid chain; its full sequence is Ubiquinone/menaquinone biosynthesis C-methyltransferase UbiE (250 aa).

S-adenosyl-L-methionine contacts are provided by residues threonine 74, aspartate 94, 122–123 (DA), and serine 139.

It belongs to the class I-like SAM-binding methyltransferase superfamily. MenG/UbiE family.

It catalyses the reaction a 2-demethylmenaquinol + S-adenosyl-L-methionine = a menaquinol + S-adenosyl-L-homocysteine + H(+). The enzyme catalyses a 2-methoxy-6-(all-trans-polyprenyl)benzene-1,4-diol + S-adenosyl-L-methionine = a 5-methoxy-2-methyl-3-(all-trans-polyprenyl)benzene-1,4-diol + S-adenosyl-L-homocysteine + H(+). The protein operates within quinol/quinone metabolism; menaquinone biosynthesis; menaquinol from 1,4-dihydroxy-2-naphthoate: step 2/2. Its pathway is cofactor biosynthesis; ubiquinone biosynthesis. Methyltransferase required for the conversion of demethylmenaquinol (DMKH2) to menaquinol (MKH2) and the conversion of 2-polyprenyl-6-methoxy-1,4-benzoquinol (DDMQH2) to 2-polyprenyl-3-methyl-6-methoxy-1,4-benzoquinol (DMQH2). This is Ubiquinone/menaquinone biosynthesis C-methyltransferase UbiE from Cereibacter sphaeroides (strain ATCC 17029 / ATH 2.4.9) (Rhodobacter sphaeroides).